The primary structure comprises 340 residues: DNA-directed RNA polymerase subunit alpha (340 aa).

Positions 1–236 (MLSLSKNWNT…EQLQLFISFE (236 aa)) are alpha N-terminal domain (alpha-NTD). An alpha C-terminal domain (alpha-CTD) region spans residues 251-340 (FSPYLLKRVD…LSKRYEDSYN (90 aa)).

Belongs to the RNA polymerase alpha chain family. Homodimer. The RNAP catalytic core consists of 2 alpha, 1 beta, 1 beta' and 1 omega subunit. When a sigma factor is associated with the core the holoenzyme is formed, which can initiate transcription.

It carries out the reaction RNA(n) + a ribonucleoside 5'-triphosphate = RNA(n+1) + diphosphate. Functionally, DNA-dependent RNA polymerase catalyzes the transcription of DNA into RNA using the four ribonucleoside triphosphates as substrates. The polypeptide is DNA-directed RNA polymerase subunit alpha (Rickettsia akari (strain Hartford)).